The sequence spans 382 residues: Mannosyl phosphorylinositol ceramide synthase SUR1 (382 aa).

Residues methionine 1 to lysine 6 are Cytoplasmic-facing. A helical membrane pass occupies residues tyrosine 7–leucine 27. Topologically, residues threonine 28 to cysteine 269 are extracellular. Residues valine 270–tryptophan 290 form a helical membrane-spanning segment. At leucine 291–serine 382 the chain is on the cytoplasmic side. Serine 349 is modified (phosphoserine).

The protein belongs to the glycosyltransferase 32 family. As to quaternary structure, heterodimer of SUR1 and CSG2.

It is found in the membrane. It catalyses the reaction a 1D-myo-inositol-1-phospho-N-[(R)-2-hydroxy-very-long-chain fatty acyl]-(R)-4-hydroxysphingoid base + GDP-alpha-D-mannose = an alpha-D-mannosyl-(1&lt;-&gt;6)-1D-myo-inositol-1-phospho-N-[(R)-2-hydroxy-very-long-chain fatty acyl]-(R)-4-hydroxysphingoid base + GDP + H(+). Its function is as follows. Involved in the synthesis of mannosyl phosphorylinositol ceramide. Catalyzes the addition of mannosyl to phosphorylinositol ceramide. Suppressor of RVS161 mutation. In Saccharomyces cerevisiae (strain ATCC 204508 / S288c) (Baker's yeast), this protein is Mannosyl phosphorylinositol ceramide synthase SUR1.